Consider the following 295-residue polypeptide: Alpha-soluble NSF attachment protein (295 aa).

Met-1 is modified (N-acetylmethionine). Phosphoserine is present on residues Ser-26, Ser-29, and Ser-195.

Belongs to the SNAP family. As to quaternary structure, interacts with PRKCABP, and disrupts the interaction between GRIA2 and PRKCABP, leading to the internalization of GRIA2. Found in a complex with VAMP8. Component of a SNARE-like complex that contains at least ZW10, USE1L, RINT1, STX18 and NAPA/SNAP-alpha. Interacts with VTI1A. Interacts with STX12. Interacts with GNA12 (via N-terminus); the interaction promotes CDH5 localization to plasma membrane.

Its subcellular location is the cell membrane. Functionally, required for vesicular transport between the endoplasmic reticulum and the Golgi apparatus. Together with GNA12 promotes CDH5 localization to plasma membrane. The protein is Alpha-soluble NSF attachment protein (NAPA) of Homo sapiens (Human).